The primary structure comprises 403 residues: uncharacterized protein (403 aa).

Transmembrane regions (helical) follow at residues 31–51, 186–206, 238–258, 268–288, 303–323, and 355–375; these read FLIATIIGPLIIIALAIIGSF, LPIGFVFLLYMAISSLSGIIV, ISAVGLLQIGIWVLFALPIII, LAIFALIYFVLGYLFYSSLLC, LISPIIIIQIIPIMFMNTIMV, and LIEIVLSTAIMIVSIVISFIL.

The protein to B.subtilis YhaP.

The protein localises to the cell membrane. This is an uncharacterized protein from Methanocaldococcus jannaschii (strain ATCC 43067 / DSM 2661 / JAL-1 / JCM 10045 / NBRC 100440) (Methanococcus jannaschii).